Consider the following 915-residue polypeptide: Alpha-xylosidase 1 (915 aa).

Positions 1-27 are cleaved as a signal peptide; that stretch reads MASSSSSLAFSLSLLLALILCFSPTQS. Asparagine 153, asparagine 304, and asparagine 375 each carry an N-linked (GlcNAc...) asparagine glycan. Active-site residues include aspartate 440 and glutamate 443. N-linked (GlcNAc...) asparagine glycans are attached at residues asparagine 476 and asparagine 490. Aspartate 563 acts as the Proton donor in catalysis. N-linked (GlcNAc...) asparagine glycosylation is found at asparagine 819, asparagine 888, and asparagine 907.

It belongs to the glycosyl hydrolase 31 family. Expressed in roots, stems, leaves, flowers and siliques. Expressed in cell types undergoing cell wall modifications, including trichomes, vasculature, stomata, and elongating anther filaments. Not detected in pollen.

The protein localises to the secreted. It is found in the cell wall. The protein resides in the extracellular space. Its subcellular location is the apoplast. The enzyme catalyses Hydrolysis of terminal, non-reducing alpha-D-xylose residues with release of alpha-D-xylose.. Glycoside hydrolase releasing xylosyl residues from xyloglucan oligosaccharides at the non-reducing end. Has alpha-xylosidase activity against xylan oligosaccharides. Also has alpha-glucosidase activity against p-nitrophenyl-alpha-D-glucopyranoside. No activity against p-nitrophenyl-D-xyloside. The chain is Alpha-xylosidase 1 from Arabidopsis thaliana (Mouse-ear cress).